Consider the following 583-residue polypeptide: Afadin- and alpha-actinin-binding protein (583 aa).

Coiled-coil stretches lie at residues 108–220 (NNVE…LAIE), 255–333 (DYEA…QLTN), and 420–453 (EEKERLKEEWRLFDEQKRNFEKERKNFTEAAIRL). The segment at 285–328 (LSPCPPLNRGGSAEESQELGDSDREERSAETSRETLDQSCEHAR) is disordered. Residues 305–328 (DSDREERSAETSRETLDQSCEHAR) are compositionally biased toward basic and acidic residues. Residues 480 to 527 (DRMRSSSSDGQSALSVKSEPEIRTSSSKAPPVKSSAYTTFSTPKSSKS) are disordered. Over residues 484–494 (SSSSDGQSALS) the composition is skewed to polar residues. Residues 504–515 (SSSKAPPVKSSA) show a composition bias toward low complexity. Over residues 516-527 (YTTFSTPKSSKS) the composition is skewed to polar residues.

This sequence belongs to the ADIP family.

The protein resides in the cell junction. Its subcellular location is the adherens junction. The protein localises to the cytoplasm. It localises to the cytoskeleton. It is found in the microtubule organizing center. The protein resides in the centrosome. Its subcellular location is the centriolar satellite. Functionally, belongs to an adhesion system, which plays a role in the organization of homotypic, interneuronal and heterotypic cell-cell adherens junctions (AJs). Involved in cell movement. Acts as a centrosome maturation factor, probably by maintaining the integrity of the pericentriolar material and proper microtubule nucleation at mitotic spindle poles. The sequence is that of Afadin- and alpha-actinin-binding protein (ssx2ip) from Oryzias latipes (Japanese rice fish).